A 159-amino-acid chain; its full sequence is Small ribosomal subunit protein uS7 (159 aa).

The protein belongs to the universal ribosomal protein uS7 family. As to quaternary structure, part of the 30S ribosomal subunit. Contacts proteins S9 and S11.

One of the primary rRNA binding proteins, it binds directly to 16S rRNA where it nucleates assembly of the head domain of the 30S subunit. Is located at the subunit interface close to the decoding center, probably blocks exit of the E-site tRNA. The chain is Small ribosomal subunit protein uS7 from Rickettsia felis (strain ATCC VR-1525 / URRWXCal2) (Rickettsia azadi).